Consider the following 387-residue polypeptide: Protein WHAT'S THIS FACTOR 9, mitochondrial (387 aa).

The N-terminal 24 residues, 1–24 (MLSIRRHAKTVASSCTNLTQKRTY), are a transit peptide targeting the mitochondrion. In terms of domain architecture, PORR spans 32–358 (KRDPYFDNIE…KKYIQLMKNS (327 aa)).

Its subcellular location is the mitochondrion. Functionally, RNA-binding protein involved in group II intron splicing. Binds specific group II introns and promotes their splicing (e.g. rpl2 and ccmFC). The sequence is that of Protein WHAT'S THIS FACTOR 9, mitochondrial from Arabidopsis thaliana (Mouse-ear cress).